A 787-amino-acid polypeptide reads, in one-letter code: Pyridoxal-dependent decarboxylase domain-containing protein 1 (787 aa).

Basic and acidic residues predominate over residues 26-44 (MLEKSPRRTEEENGKKPVS). The disordered stretch occupies residues 26 to 52 (MLEKSPRRTEEENGKKPVSEDIPGPLQ). Phosphoserine is present on S652. The interval 682–787 (QGTGVTPPPT…SQVEELERLR (106 aa)) is disordered. Residues T687 and T691 each carry the phosphothreonine modification. Phosphoserine occurs at positions 710, 718, 722, and 748. Positions 725 to 748 (HIEDLEKVEQLSSGLEHDNLEAHS) are enriched in basic and acidic residues. Residues 759-771 (TARQTEALQNQAQ) are compositionally biased toward polar residues. Over residues 772–787 (HQEDDHSQVEELERLR) the composition is skewed to basic and acidic residues. A Phosphoserine modification is found at S778.

Belongs to the group II decarboxylase family. Pyridoxal 5'-phosphate is required as a cofactor.

The polypeptide is Pyridoxal-dependent decarboxylase domain-containing protein 1 (Pdxdc1) (Mus musculus (Mouse)).